A 313-amino-acid polypeptide reads, in one-letter code: MSQEFAHLSVLLKETVDGLNIQPDGIYIDGTFGRGGHSRHVLSHLGPNGRLIAIDRDPQAIEAAKQFADDPRFQIVHGGFGQLADYVAELGLVGKIDGVLLDLGVSSPQLDDAERGFSFLRDGPLDMRMDNSQGQTAAQWIARAEIEDMAWVFKTYGEEKNSRHIARCIAADREKTPFLRTKDLADLIARITKNKERNKHPATRVFQAIRIYINSELEQIDQALEGAVNVLAPHGRMSIISFHSLEDRMVKRFMRRHSQGESVPHGLPITEAEINKSKKLKTLGKAMKPSEIEVEQNPRARSSVLRVAERLDY.

Residues 35-37 (GGH), D55, F80, D102, and Q109 each bind S-adenosyl-L-methionine.

Belongs to the methyltransferase superfamily. RsmH family.

It localises to the cytoplasm. It catalyses the reaction cytidine(1402) in 16S rRNA + S-adenosyl-L-methionine = N(4)-methylcytidine(1402) in 16S rRNA + S-adenosyl-L-homocysteine + H(+). Specifically methylates the N4 position of cytidine in position 1402 (C1402) of 16S rRNA. In Shewanella denitrificans (strain OS217 / ATCC BAA-1090 / DSM 15013), this protein is Ribosomal RNA small subunit methyltransferase H.